A 122-amino-acid polypeptide reads, in one-letter code: Large ribosomal subunit protein uL14c (122 aa).

This sequence belongs to the universal ribosomal protein uL14 family. Part of the 50S ribosomal subunit.

Its subcellular location is the plastid. It localises to the cyanelle. In terms of biological role, binds to 23S rRNA. The chain is Large ribosomal subunit protein uL14c from Cyanophora paradoxa.